A 179-amino-acid polypeptide reads, in one-letter code: Large ribosomal subunit protein uL5 (179 aa).

It belongs to the universal ribosomal protein uL5 family. Part of the 50S ribosomal subunit; part of the 5S rRNA/L5/L18/L25 subcomplex. Contacts the 5S rRNA and the P site tRNA. Forms a bridge to the 30S subunit in the 70S ribosome.

This is one of the proteins that bind and probably mediate the attachment of the 5S RNA into the large ribosomal subunit, where it forms part of the central protuberance. In the 70S ribosome it contacts protein S13 of the 30S subunit (bridge B1b), connecting the 2 subunits; this bridge is implicated in subunit movement. Contacts the P site tRNA; the 5S rRNA and some of its associated proteins might help stabilize positioning of ribosome-bound tRNAs. The chain is Large ribosomal subunit protein uL5 from Paraburkholderia phymatum (strain DSM 17167 / CIP 108236 / LMG 21445 / STM815) (Burkholderia phymatum).